We begin with the raw amino-acid sequence, 695 residues long: DSC E3 ubiquitin ligase complex subunit 1 (695 aa).

Positions Met1–Ala25 are cleaved as a signal peptide. Topologically, residues Pro26–Asn319 are lumenal. Residues His320–Leu340 traverse the membrane as a helical segment. The Cytoplasmic portion of the chain corresponds to Arg341–Arg353. A helical transmembrane segment spans residues Leu354–Leu374. Topologically, residues Ser375–Lys382 are lumenal. The helical transmembrane segment at Gly383–Met403 threads the bilayer. Residues Arg404–Arg486 are Cytoplasmic-facing. The interval Pro419–His473 is disordered. Residues Asn427–Asn454 show a composition bias toward low complexity. The helical transmembrane segment at Phe487–Ile507 threads the bilayer. Residues Tyr508–Arg509 are Lumenal-facing. The helical transmembrane segment at Phe510–Gln530 threads the bilayer. Over Asn531–Phe540 the chain is Cytoplasmic. Residues Thr541–Ile561 traverse the membrane as a helical segment. Over Asp562 to Lys572 the chain is Lumenal. A helical transmembrane segment spans residues Tyr573 to Gln593. Topologically, residues Asp594–Val695 are cytoplasmic. The RING-type; atypical zinc finger occupies Cys634–Arg689.

Component of the DSC E3 ubiquitin ligase complex composed of dsc1, dsc2, dsc3 and dsc4.

It is found in the endoplasmic reticulum membrane. It localises to the golgi apparatus membrane. The enzyme catalyses S-ubiquitinyl-[E2 ubiquitin-conjugating enzyme]-L-cysteine + [acceptor protein]-L-lysine = [E2 ubiquitin-conjugating enzyme]-L-cysteine + N(6)-ubiquitinyl-[acceptor protein]-L-lysine.. It functions in the pathway protein modification; protein ubiquitination. Catalytic component of the DSC E3 ubiquitin ligase complex which is required for the sre1 transcriptional activator proteolytic cleavage to release the soluble transcription factor from the membrane in low oxygen or sterol conditions. The complex also plays an important role in the multivesicular body (MVB) pathway and functions in a post-endoplasmic reticulum pathway for protein degradation. The protein is DSC E3 ubiquitin ligase complex subunit 1 (dsc1) of Schizosaccharomyces pombe (strain 972 / ATCC 24843) (Fission yeast).